A 139-amino-acid chain; its full sequence is Flagellar basal body rod protein FlgB (139 aa).

This sequence belongs to the flagella basal body rod proteins family. In terms of assembly, the basal body constitutes a major portion of the flagellar organelle and consists of a number of rings mounted on a central rod. In Gram-negative bacteria, at least four rings, L, P, S and M are present, whereas Gram-positive bacteria lack the L and P rings. The rod consists of about 26 subunits of FlgG in the distal portion, and FlgB, FlgC and FlgF build up the proximal portion of the rod with about 6 subunits each. Rod assembly occurs by export via the flagellum-specific pathway of its constituent proteins and by their incorporation into the rod structure in the probable order of FlgB, FlgC, FlgF and FlgG. Another protein, FliE, also assembles onto the stable rod structure.

The protein resides in the bacterial flagellum basal body. Its function is as follows. Structural component of flagellum, the bacterial motility apparatus. Part of the rod structure of flagellar basal body. This chain is Flagellar basal body rod protein FlgB, found in Proteus mirabilis.